Reading from the N-terminus, the 163-residue chain is Olfactory marker protein (163 aa).

Ala2 carries the post-translational modification N-acetylalanine.

Belongs to the olfactory marker protein family. In terms of assembly, interacts with BEX1 and BEX2. Uniquely associated with mature olfactory receptor neurons.

The protein resides in the cytoplasm. Functionally, may act as a modulator of the olfactory signal-transduction cascade. The protein is Olfactory marker protein (Omp) of Rattus norvegicus (Rat).